Here is a 135-residue protein sequence, read N- to C-terminus: MTVKLGFVVAEFNRDITYMMEIEAREHAGFLDAEVADTIYVPGAYDMPLAIKKLLERGEIDAVVTIGCVIEGATQHDEIVVQHAARKIIDLSLEFGKPVALGISGPGMTRMEATERIDYAKRAVESAVKMVQRLE.

Residues Phe12, 44–46, and 68–70 contribute to the 5-amino-6-(D-ribitylamino)uracil site; these read AYD and CVI. (2S)-2-hydroxy-3-oxobutyl phosphate is bound at residue 73-74; sequence AT. Residue His76 is the Proton donor of the active site. Residue Leu101 participates in 5-amino-6-(D-ribitylamino)uracil binding. Arg116 lines the (2S)-2-hydroxy-3-oxobutyl phosphate pocket.

The protein belongs to the DMRL synthase family.

It carries out the reaction (2S)-2-hydroxy-3-oxobutyl phosphate + 5-amino-6-(D-ribitylamino)uracil = 6,7-dimethyl-8-(1-D-ribityl)lumazine + phosphate + 2 H2O + H(+). It functions in the pathway cofactor biosynthesis; riboflavin biosynthesis; riboflavin from 2-hydroxy-3-oxobutyl phosphate and 5-amino-6-(D-ribitylamino)uracil: step 1/2. Its function is as follows. Catalyzes the formation of 6,7-dimethyl-8-ribityllumazine by condensation of 5-amino-6-(D-ribitylamino)uracil with 3,4-dihydroxy-2-butanone 4-phosphate. This is the penultimate step in the biosynthesis of riboflavin. The polypeptide is 6,7-dimethyl-8-ribityllumazine synthase (Methanoculleus marisnigri (strain ATCC 35101 / DSM 1498 / JR1)).